We begin with the raw amino-acid sequence, 224 residues long: Heme response regulator HssR (224 aa).

The region spanning Gln-3 to Leu-116 is the Response regulatory domain. Asp-52 bears the 4-aspartylphosphate mark. Residues Asn-124–Asn-222 constitute a DNA-binding region (ompR/PhoB-type).

Post-translationally, phosphorylated by HssS.

The protein resides in the cytoplasm. Functionally, member of the two-component regulatory system HssS/HssR involved in intracellular heme homeostasis and tempering of staphylococcal virulence. Phosphorylated HssR binds to a direct repeat sequence within hrtAB promoter and activates the expression of hrtAB, an efflux pump, in response to extracellular heme, hemin, hemoglobin or blood. The protein is Heme response regulator HssR (hssR) of Staphylococcus aureus (strain MRSA252).